Consider the following 170-residue polypeptide: Fibroblast growth factor 2 (170 aa).

The disordered stretch occupies residues 1 to 21 (VGGRGRGRGTAAAARREPGGA). Omega-N-methylarginine; alternate is present on residues arginine 4, arginine 6, and arginine 8. Symmetric dimethylarginine; alternate is present on residues arginine 4, arginine 6, and arginine 8. Residues 9-21 (GTAAAARREPGGA) are compositionally biased toward low complexity. Asparagine 51 is a binding site for heparin. The residue at position 97 (tyrosine 97) is a Phosphotyrosine; by TEC. Lysine 110 is covalently cross-linked (Glycyl lysine isopeptide (Lys-Gly) (interchain with G-Cter in SUMO1)). The heparin-binding stretch occupies residues 143-159 (KRTGQYKLGSKTGPGQK).

Belongs to the heparin-binding growth factors family. In terms of assembly, monomer. Homodimer. Interacts with FGFR1, FGFR2, FGFR3 and FGFR4. Affinity between fibroblast growth factors (FGFs) and their receptors is increased by heparan sulfate glycosaminoglycans that function as coreceptors. Interacts with CSPG4, FGFBP1 and TEC. Found in a complex with FGFBP1, FGF1 and FGF2. Interacts with FGFBP3. Interacts with integrin ITGAV:ITGB3; the interaction is required for FGF2 signaling. Interacts with SNORC (via the extracellular domain). Interacts with glypican GPC3. Post-translationally, the N-terminus of isoform 2 is blocked. In terms of processing, phosphorylation at Tyr-97 regulates FGF2 unconventional secretion.

It is found in the secreted. Its subcellular location is the nucleus. In terms of biological role, acts as a ligand for FGFR1, FGFR2, FGFR3 and FGFR4. Also acts as an integrin ligand which is required for FGF2 signaling. Binds to integrin ITGAV:ITGB3. Plays an important role in the regulation of cell survival, cell division, cell differentiation and cell migration. Functions as a potent mitogen in vitro. Can induce angiogenesis. Mediates phosphorylation of ERK1/2 and thereby promotes retinal lens fiber differentiation. The sequence is that of Fibroblast growth factor 2 (FGF2) from Cavia porcellus (Guinea pig).